We begin with the raw amino-acid sequence, 572 residues long: mRNA cap guanine-N(7) methyltransferase (572 aa).

2 disordered regions span residues 1-75 (MPED…GSRV) and 110-140 (EKAINTANPPPPSTTTTPSSTTSSSSSFPSS). Composition is skewed to basic and acidic residues over residues 24–39 (ANDGHTEFSRRDRVHD) and 59–69 (SADENKDKKYD). Positions 123 to 140 (TTTTPSSTTSSSSSFPSS) are enriched in low complexity. The mRNA cap 0 methyltransferase domain occupies 262–571 (SPIYKLRNFN…FYVAFVFEKV (310 aa)). Position 271–272 (271–272 (NN)) interacts with mRNA. S-adenosyl-L-methionine contacts are provided by Lys-275, Cys-302, Asp-324, Asp-366, Gln-396, and Tyr-401.

Belongs to the class I-like SAM-binding methyltransferase superfamily. mRNA cap 0 methyltransferase family.

The protein resides in the nucleus. It catalyses the reaction a 5'-end (5'-triphosphoguanosine)-ribonucleoside in mRNA + S-adenosyl-L-methionine = a 5'-end (N(7)-methyl 5'-triphosphoguanosine)-ribonucleoside in mRNA + S-adenosyl-L-homocysteine. Responsible for methylating the 5'-cap structure of mRNAs. This Lodderomyces elongisporus (strain ATCC 11503 / CBS 2605 / JCM 1781 / NBRC 1676 / NRRL YB-4239) (Yeast) protein is mRNA cap guanine-N(7) methyltransferase (ABD1).